A 329-amino-acid chain; its full sequence is Delta-aminolevulinic acid dehydratase (329 aa).

Positions 122, 124, and 132 each coordinate Zn(2+). Lys-199 (schiff-base intermediate with substrate) is an active-site residue. Residues Arg-209 and Arg-221 each contribute to the 5-aminolevulinate site. The Schiff-base intermediate with substrate role is filled by Lys-252. Residues Ser-279 and Tyr-318 each coordinate 5-aminolevulinate.

This sequence belongs to the ALAD family. As to quaternary structure, homooctamer. Zn(2+) is required as a cofactor.

It catalyses the reaction 2 5-aminolevulinate = porphobilinogen + 2 H2O + H(+). It functions in the pathway porphyrin-containing compound metabolism; protoporphyrin-IX biosynthesis; coproporphyrinogen-III from 5-aminolevulinate: step 1/4. Its function is as follows. Catalyzes an early step in the biosynthesis of tetrapyrroles. Binds two molecules of 5-aminolevulinate per subunit, each at a distinct site, and catalyzes their condensation to form porphobilinogen. This Schizosaccharomyces pombe (strain 972 / ATCC 24843) (Fission yeast) protein is Delta-aminolevulinic acid dehydratase (hem2).